The primary structure comprises 497 residues: Serine hydroxymethyltransferase, mitochondrial (497 aa).

Residues 1-27 (MFIRRLHTSSRRLTCGEALRACQQTGA) constitute a mitochondrion transit peptide. K272 is subject to N6-(pyridoxal phosphate)lysine.

Belongs to the SHMT family. In terms of assembly, homotetramer. Pyridoxal 5'-phosphate is required as a cofactor.

The protein resides in the mitochondrion. The catalysed reaction is (6R)-5,10-methylene-5,6,7,8-tetrahydrofolate + glycine + H2O = (6S)-5,6,7,8-tetrahydrofolate + L-serine. The protein operates within one-carbon metabolism; tetrahydrofolate interconversion. Its function is as follows. Interconversion of serine and glycine. In Eremothecium gossypii (strain ATCC 10895 / CBS 109.51 / FGSC 9923 / NRRL Y-1056) (Yeast), this protein is Serine hydroxymethyltransferase, mitochondrial (SHM1).